The following is a 596-amino-acid chain: MAGNCGARGALSAHTLLFDLPPALLGELCAVLDSCDGALGWRGLAERLSSSWLDVRHIEKYVDQGKSGTRELLWSWAQKNKTIGDLLQVLQEMGHRRAIHLITNYGAVLSPSEKSYQEGGFPNILFKETANVTVDNVLIPEHNEKGILLKSSISFQNIIEGTRNFHKDFLIGEGEIFEVYRVEIQNLTYAVKLFKQEKKMQCKKHWKRFLSELEVLLLFHHPNILELAAYFTETEKFCLIYPYMRNGTLFDRLQCVGDTAPLPWHIRIGILIGISKAIHYLHNVQPCSVICGSISSANILLDDQFQPKLTDFAMAHFRSHLEHQSCTINMTSSSSKHLWYMPEEYIRQGKLSIKTDVYSFGIVIMEVLTGCRVVLDDPKHIQLRDLLRELMEKRGLDSCLSFLDKKVPPCPRNFSAKLFCLAGRCAATRAKLRPSMDEVLNTLESTQASLYFAEDPPTSLKSFRCPSPLFLENVPSIPVEDDESQNNNLLPSDEGLRIDRMTQKTPFECSQSEVMFLSLDKKPESKRNEEACNMPSSSCEESWFPKYIVPSQDLRPYKVNIDPSSEAPGHSCRSRPVESSCSSKFSWDEYEQYKKE.

Residues 41–106 (WRGLAERLSS…RAIHLITNYG (66 aa)) form the Death domain. Residue S110 is modified to Phosphoserine; by IRAK1. The Protein kinase domain occupies 165 to 452 (FHKDFLIGEG…LESTQASLYF (288 aa)). ATP-binding positions include 171-179 (IGEGEIFEV), K192, 295-298 (SSAN), and D311. Residue S467 is modified to Phosphoserine. Residues 560-596 (NIDPSSEAPGHSCRSRPVESSCSSKFSWDEYEQYKKE) are disordered.

This sequence belongs to the protein kinase superfamily. TKL Ser/Thr protein kinase family. Pelle subfamily. As to quaternary structure, monomer. Homodimer; disulfide-linked. May interact with IRAK4 (when phosphorylated). Interacts (when phosphorylated at Ser-110) with PIN1 (via WW domain) in response to IL33-mediated (but not TLR4 ligand LPS) dendritic cell stimulation. As to expression, expressed in eosinophils, dendritic cells and/or monocytes (at protein level). Expressed predominantly in peripheral blood lymphocytes.

The protein localises to the cytoplasm. It localises to the nucleus. Its function is as follows. Putative inactive protein kinase which regulates signaling downstream of immune receptors including IL1R and Toll-like receptors. Inhibits dissociation of IRAK1 and IRAK4 from the Toll-like receptor signaling complex by either inhibiting the phosphorylation of IRAK1 and IRAK4 or stabilizing the receptor complex. Upon IL33-induced lung inflammation, positively regulates expression of IL6, CSF3, CXCL2 and CCL5 mRNAs in dendritic cells. This chain is Interleukin-1 receptor-associated kinase 3, found in Homo sapiens (Human).